The following is a 359-amino-acid chain: Oxopyrrolidines biosynthesis cluster protein G (359 aa).

Residues 1–32 form a disordered region; sequence MDHLRDSLLSSLPRDSPSIGAMDYARRDREST. The span at 7–18 shows a compositional bias: low complexity; that stretch reads SLLSSLPRDSPS.

Its function is as follows. Part of the gene cluster that mediates the biosynthesis of oxopyrrolidines, polyketide-amino acid hybrid compounds with feature structures of tetramic acid. Does not seem to play a role in oxopyrrolidines A and B biosynthesis. The protein is Oxopyrrolidines biosynthesis cluster protein G of Penicillium oxalicum (strain 114-2 / CGMCC 5302) (Penicillium decumbens).